A 102-amino-acid chain; its full sequence is Simukunin (102 aa).

Residues 1–19 (MNILPISAFFLLYLGHSLA) form the signal peptide. Residues 24–74 (CNLPVDEGVCRALFKRFYYEPATDSCKEFYYGGCEGNGNRFKSKKECILKC) enclose the BPTI/Kunitz inhibitor domain. 3 disulfide bridges follow: cysteine 24–cysteine 74, cysteine 33–cysteine 57, and cysteine 49–cysteine 70. Residues 83 to 92 (TRKRKPKKTT) are compositionally biased toward basic residues. Residues 83–102 (TRKRKPKKTTKPPIPIISLD) form a disordered region.

It belongs to the venom Kunitz-type family. Interacts with mouse, bovine and human coagulation factor X (F10) (activated). Interacts with host elastase. In terms of tissue distribution, salivary gland (at protein level). Not detected in female carcass without head and salivary glands. Not detected in males.

Its subcellular location is the secreted. In terms of biological role, salivary anticoagulant that inhibits plasma clotting in the host. Strongly inhibits host elastase, coagulation factors Xa (F10) and cathepsin G (CTSG). Inhibits host plasmin (PLG), kallikrein, trypsin, beta-tryptase and coagulation factor XIa (F11). This chain is Simukunin, found in Simulium vittatum (Striped black fly).